The chain runs to 123 residues: Probable histone H2B 4 (123 aa).

The tract at residues 1 to 30 (MPPKPSAKGAKKAAKTVVAKPKDGKKRRHA) is disordered. A glycan (O-linked (GlcNAc) serine) is linked at Ser-110. Lys-118 is covalently cross-linked (Glycyl lysine isopeptide (Lys-Gly) (interchain with G-Cter in ubiquitin)).

This sequence belongs to the histone H2B family. In terms of assembly, the nucleosome is a histone octamer containing two molecules each of H2A, H2B, H3 and H4 assembled in one H3-H4 heterotetramer and two H2A-H2B heterodimers. The octamer wraps approximately 147 bp of DNA. Monoubiquitination of Lys-118 gives a specific tag for epigenetic transcriptional activation and is also prerequisite for histone H3 'Lys-4' and 'Lys-79' methylation. In terms of processing, glcNAcylation at Ser-110 promotes monoubiquitination of Lys-118. It fluctuates in response to extracellular glucose, and associates with transcribed genes.

It localises to the nucleus. It is found in the chromosome. Its function is as follows. Core component of nucleosome. Nucleosomes wrap and compact DNA into chromatin, limiting DNA accessibility to the cellular machineries which require DNA as a template. Histones thereby play a central role in transcription regulation, DNA repair, DNA replication and chromosomal stability. DNA accessibility is regulated via a complex set of post-translational modifications of histones, also called histone code, and nucleosome remodeling. This is Probable histone H2B 4 (his-48) from Caenorhabditis elegans.